Consider the following 489-residue polypeptide: Probable serine protease EDA2 (489 aa).

A signal peptide spans 1–25 (MSLEFGFILINIFTAIVSFSTLSHA). 3 N-linked (GlcNAc...) asparagine glycosylation sites follow: N35, N51, and N162. S178 serves as the catalytic Charge relay system. 4 N-linked (GlcNAc...) asparagine glycosylation sites follow: N253, N293, N365, and N406. The active-site Charge relay system is the D410. An N-linked (GlcNAc...) asparagine glycan is attached at N419. H436 acts as the Charge relay system in catalysis. An N-linked (GlcNAc...) asparagine glycan is attached at N456.

The protein belongs to the peptidase S28 family.

The protein localises to the secreted. Functionally, may be involved in a proteolytic pathway controlling the nuclear division phase of megagametogenesis. This chain is Probable serine protease EDA2 (EDA2), found in Arabidopsis thaliana (Mouse-ear cress).